The following is a 174-amino-acid chain: Chorion class CB protein M5H4 (174 aa).

A signal peptide spans 1-20 (MTTIVVLICASALFVQLAFS). The interval 21 to 71 (QCLGRDPVIGFGGAYGSGWGGYDAISPYDGLGYGVPYSAGFIGLSPSNLAA) is left arm. A central domain region spans residues 72-142 (SCGGALAVNS…GDGAIGIVSE (71 aa)). Positions 143-174 (APIVAPASIGYGQWPVNAGYKGIGPCGCGGLY) are right arm.

It belongs to the chorion protein family.

In terms of biological role, this protein is one of many from the eggshell of the silk moth. This Bombyx mori (Silk moth) protein is Chorion class CB protein M5H4.